The following is a 207-amino-acid chain: Ribosomal RNA large subunit methyltransferase E (207 aa).

S-adenosyl-L-methionine-binding residues include glycine 60, tryptophan 62, aspartate 80, aspartate 96, and aspartate 121. Lysine 161 serves as the catalytic Proton acceptor.

This sequence belongs to the class I-like SAM-binding methyltransferase superfamily. RNA methyltransferase RlmE family.

Its subcellular location is the cytoplasm. It carries out the reaction uridine(2552) in 23S rRNA + S-adenosyl-L-methionine = 2'-O-methyluridine(2552) in 23S rRNA + S-adenosyl-L-homocysteine + H(+). Its function is as follows. Specifically methylates the uridine in position 2552 of 23S rRNA at the 2'-O position of the ribose in the fully assembled 50S ribosomal subunit. In Ectopseudomonas mendocina (strain ymp) (Pseudomonas mendocina), this protein is Ribosomal RNA large subunit methyltransferase E.